The primary structure comprises 199 residues: MAKSAEVKLAIFGRAGVGKSALVVRFLTKRFIWEYDPTLESTYRHQATIDDEVVSMEILDTAGQEDTIQREGHMRWGEGFVLVYDITDRGSFEEVLPLKNILDEIKKPKNVTLILVGNKADLDHSRQVSTEEGEKLATELACAFYECSACTGEGNITEIFYELCREVRRRRMVQGKTRRRSSTTHVKQAINKMLTKISS.

GTP is bound by residues 13 to 20 (GRAGVGKS), 60 to 64 (DTAGQ), and 118 to 121 (NKAD).

Belongs to the small GTPase superfamily. Ras family. As to expression, detected in heart, brain, placenta, lung, liver, skin, kidney and pancreas. Detected in estrogen receptor-positive breast-derived cell lines, but not in estrogen receptor-negative cell lines. Expression is decreased or lost in a significant proportion of primary breast tumors with poor clinical prognosis.

It is found in the cytoplasm. The catalysed reaction is GTP + H2O = GDP + phosphate + H(+). Binds GDP/GTP and possesses intrinsic GTPase activity. Has higher affinity for GDP than for GTP. In cell lines overexpression leads to a reduction in the rate of proliferation, colony formation and in tumorigenic potential. The chain is Ras-related and estrogen-regulated growth inhibitor (RERG) from Homo sapiens (Human).